We begin with the raw amino-acid sequence, 212 residues long: Proteasome subunit beta type-2 (212 aa).

It belongs to the peptidase T1B family. The 26S proteasome consists of a 20S proteasome core and two 19S regulatory subunits. The 20S proteasome core is composed of 28 subunits that are arranged in four stacked rings, resulting in a barrel-shaped structure. The two end rings are each formed by seven alpha subunits, and the two central rings are each formed by seven beta subunits. The catalytic chamber with the active sites is on the inside of the barrel.

It is found in the cytoplasm. The protein resides in the nucleus. Functionally, non-catalytic component of the proteasome, a multicatalytic proteinase complex which is characterized by its ability to cleave peptides with Arg, Phe, Tyr, Leu, and Glu adjacent to the leaving group at neutral or slightly basic pH. The proteasome has an ATP-dependent proteolytic activity. This is Proteasome subunit beta type-2 (PBD1) from Oryza sativa subsp. japonica (Rice).